Consider the following 426-residue polypeptide: Alpha-ionylideneethane synthase abl3 (426 aa).

Belongs to the alpha-ionylideneethane synthase family.

It functions in the pathway hormone biosynthesis. Its function is as follows. Alpha-ionylideneethane synthase; part of the gene cluster that mediates the biosynthesis of abscisic acid (ABA), a phytohormone that acts antagonistically toward salicylic acid (SA), jasmonic acid (JA) and ethylene (ETH) signaling, to impede plant defense responses. The first step of the pathway catalyzes the reaction from farnesyl diphosphate to alpha-ionylideneethane performed by the alpha-ionylideneethane synthase abl3 via a three-step reaction mechanism involving 2 neutral intermediates, beta-farnesene and allofarnesene. The cytochrome P450 monooxygenase abl1 might then be involved in the conversion of alpha-ionylideneethane to alpha-ionylideneacetic acid. Alpha-ionylideneacetic acid is further converted to abscisic acid in 2 steps involving the cytochrome P450 monooxygenase abl2 and the short-chain dehydrogenase/reductase abl4, via the intermediates 1'-deoxy-ABA or 1',4'-trans-diol-ABA, depending on the order of action of these 2 enzymes. Abl2 is responsible for the hydroxylation of carbon atom C-1' and abl4 might be involved in the oxidation of the C-4' carbon atom. In Leptosphaeria maculans (strain JN3 / isolate v23.1.3 / race Av1-4-5-6-7-8) (Blackleg fungus), this protein is Alpha-ionylideneethane synthase abl3.